A 372-amino-acid chain; its full sequence is Heat-inducible transcription repressor HrcA (372 aa).

Positions 296–331 (VSSGYGRSGEAGEPAGNDPVGEPETESETESQTNDM) are disordered.

Belongs to the HrcA family.

In terms of biological role, negative regulator of class I heat shock genes (grpE-dnaK-dnaJ and groELS operons). Prevents heat-shock induction of these operons. In Bifidobacterium longum subsp. infantis (strain ATCC 15697 / DSM 20088 / JCM 1222 / NCTC 11817 / S12), this protein is Heat-inducible transcription repressor HrcA.